A 206-amino-acid chain; its full sequence is MKKMSARQQQILDFIKDEVRAKGYPPSVREIGEAVGLASSSTVHGHLDRLEKRGLIRRDKTKPRAIEILTDDMPTMEEQESVMYVPVIGKVTAGTPITAIENVEEHFPLPAHIVGSDNVYMLSVSGDSMINAGILDGDRVLVRQQSTADNGEIVVAMTEEGEATVKRIYKEASKVRLQPENDELEAMYFDNVSILGKVIGVYRTIH.

Residues 28-48 (VREIGEAVGLASSSTVHGHLD) constitute a DNA-binding region (H-T-H motif). Active-site for autocatalytic cleavage activity residues include Ser128 and Lys166.

Belongs to the peptidase S24 family. In terms of assembly, homodimer.

It carries out the reaction Hydrolysis of Ala-|-Gly bond in repressor LexA.. Functionally, represses a number of genes involved in the response to DNA damage (SOS response), including recA and lexA. In the presence of single-stranded DNA, RecA interacts with LexA causing an autocatalytic cleavage which disrupts the DNA-binding part of LexA, leading to derepression of the SOS regulon and eventually DNA repair. The polypeptide is LexA repressor (Exiguobacterium sp. (strain ATCC BAA-1283 / AT1b)).